Here is a 215-residue protein sequence, read N- to C-terminus: Cytochrome b6 (215 aa).

The helical transmembrane segment at 32 to 52 (IFYCLGGITLTCFLVQVATGF) threads the bilayer. A heme c-binding site is contributed by cysteine 35. Heme b contacts are provided by histidine 86 and histidine 100. The next 3 helical transmembrane spans lie at 90-110 (ASMM…TGGF), 116-136 (LTWV…VTGY), and 186-206 (LHTF…FPMI). The heme b site is built by histidine 187 and histidine 202.

The protein belongs to the cytochrome b family. PetB subfamily. In terms of assembly, the 4 large subunits of the cytochrome b6-f complex are cytochrome b6, subunit IV (17 kDa polypeptide, PetD), cytochrome f and the Rieske protein, while the 4 small subunits are PetG, PetL, PetM and PetN. The complex functions as a dimer. The cofactor is heme b. Requires heme c as cofactor.

It is found in the plastid. The protein resides in the chloroplast thylakoid membrane. In terms of biological role, component of the cytochrome b6-f complex, which mediates electron transfer between photosystem II (PSII) and photosystem I (PSI), cyclic electron flow around PSI, and state transitions. The sequence is that of Cytochrome b6 from Agrostis stolonifera (Creeping bentgrass).